The chain runs to 263 residues: LOB domain-containing protein 41 (263 aa).

The LOB domain occupies 3–109 (MSCNGCRVLR…VEAVMKGEPV (107 aa)). A disordered region spans residues 162–204 (TVAIQAESEGKSDEASHDSSLSHQSEIVAAHEGESKESESNVS). 2 stretches are compositionally biased toward basic and acidic residues: residues 169-178 (SEGKSDEASH) and 190-200 (AAHEGESKESE).

The protein belongs to the LOB domain-containing protein family. As to expression, expressed in young shoots, roots, stems, leaves and flowers.

The sequence is that of LOB domain-containing protein 41 (LBD41) from Arabidopsis thaliana (Mouse-ear cress).